We begin with the raw amino-acid sequence, 118 residues long: Histone H4 (118 aa).

The segment at 1 to 39 is disordered; that stretch reads MATDTGSGRGKGGKGVTLGKGSKGAKASKGGKRIRTKTQ. Residues 7–22 are compositionally biased toward gly residues; sequence SGRGKGGKGVTLGKGS.

Belongs to the histone H4 family. The nucleosome is a histone octamer containing two molecules each of H2A, H2B, H3 and H4 assembled in one H3-H4 heterotetramer and two H2A-H2B heterodimers. The octamer wraps approximately 147 bp of DNA.

It is found in the nucleus. The protein localises to the chromosome. In terms of biological role, core component of nucleosome. Nucleosomes wrap and compact DNA into chromatin, limiting DNA accessibility to the cellular machineries which require DNA as a template. Histones thereby play a central role in transcription regulation, DNA repair, DNA replication and chromosomal stability. DNA accessibility is regulated via a complex set of post-translational modifications of histones, also called histone code, and nucleosome remodeling. In Entamoeba histolytica (strain ATCC 30459 / HM-1:IMSS / ABRM), this protein is Histone H4.